A 747-amino-acid chain; its full sequence is Myotubularin-related protein 12 (747 aa).

The segment covering 1–14 (MLGKGVVGGGGGTK) has biased composition (gly residues). Residues 1 to 21 (MLGKGVVGGGGGTKGPKPSFV) are disordered. The region spanning 205-643 (FDTLKDWCWE…PEIKVWAQRY (439 aa)) is the Myotubularin phosphatase domain. Residues 449-558 (VPVFLLFLDC…KGQRKGMRFK (110 aa)) form an interaction with MTM1 region. Phosphoserine is present on residues serine 564, serine 601, and serine 716.

Belongs to the protein-tyrosine phosphatase family. Non-receptor class myotubularin subfamily. In terms of assembly, heterodimer with lipid phosphatase MTM1. Heterodimer with lipid phosphatase MTMR2.

The protein localises to the cytoplasm. The protein resides in the sarcoplasmic reticulum. It localises to the myofibril. It is found in the sarcomere. In terms of biological role, acts as an adapter for the myotubularin-related phosphatases. Regulates phosphatase MTM1 protein stability and possibly its intracellular location. By stabilizing MTM1 protein levels, required for skeletal muscle maintenance but not for myogenesis. This is Myotubularin-related protein 12 (MTMR12) from Pongo abelii (Sumatran orangutan).